Reading from the N-terminus, the 210-residue chain is Ras-related protein Rab-8 (210 aa).

GTP is bound at residue 15 to 22; the sequence is GDSGVGKT. An Effector region motif is present at residues 37–45; the sequence is FISTIGIDF. GTP contacts are provided by residues 63 to 67 and 121 to 124; these read DTAGQ and NKCD. C207 is modified (cysteine methyl ester). Residue C207 is the site of S-geranylgeranyl cysteine attachment. Residues 208–210 constitute a propeptide, removed in mature form; the sequence is SLL.

It belongs to the small GTPase superfamily. Rab family.

Its subcellular location is the cell membrane. This chain is Ras-related protein Rab-8, found in Diplobatis ommata (Ocellated electric ray).